The following is a 475-amino-acid chain: ATP synthase subunit beta (475 aa).

Position 153 to 160 (153 to 160 (GGAGVGKT)) interacts with ATP.

It belongs to the ATPase alpha/beta chains family. F-type ATPases have 2 components, CF(1) - the catalytic core - and CF(0) - the membrane proton channel. CF(1) has five subunits: alpha(3), beta(3), gamma(1), delta(1), epsilon(1). CF(0) has three main subunits: a(1), b(2) and c(9-12). The alpha and beta chains form an alternating ring which encloses part of the gamma chain. CF(1) is attached to CF(0) by a central stalk formed by the gamma and epsilon chains, while a peripheral stalk is formed by the delta and b chains.

It localises to the cell membrane. It catalyses the reaction ATP + H2O + 4 H(+)(in) = ADP + phosphate + 5 H(+)(out). Its function is as follows. Produces ATP from ADP in the presence of a proton gradient across the membrane. The catalytic sites are hosted primarily by the beta subunits. This is ATP synthase subunit beta from Limosilactobacillus reuteri (strain DSM 20016) (Lactobacillus reuteri).